A 99-amino-acid polypeptide reads, in one-letter code: CLAVATA3/ESR (CLE)-related protein 41 (99 aa).

The N-terminal stretch at 1 to 34 is a signal peptide; sequence MATSNDQTNTKSSHSRTLLLLFIFLSLLLFSSLT. The tract at residues 60–99 is disordered; it reads ASSTMDLRPKASTRRSRTSRRREFGNDAHEVPSGPNPISN. A compositionally biased stretch (basic residues) spans 70 to 79; that stretch reads ASTRRSRTSR. The segment covering 80–89 has biased composition (basic and acidic residues); the sequence is RREFGNDAHE. Hydroxyproline occurs at positions 91 and 94. Pro-94 carries O-linked (Ara...) hydroxyproline glycosylation.

The protein belongs to the CLV3/ESR signal peptide family. In terms of assembly, CLE41p interacts specifically with the leucine-rich repeat receptor-like protein kinase TDR. The O-glycosylation (arabinosylation) of the hydroxyproline Pro-94 enhances binding affinity of the CLE41p peptide for its receptor. In terms of tissue distribution, mostly expressed in inflorescence and roots, and, to a lower extent, in seedlings, flowers, leaves and siliques. Observed along the vascular strands in cotyledons, leaves and roots, but not in shoot apical meristems (SAM). Restricted to the phloem and the neighboring pericycle cells in the roots and hypocotyls.

It is found in the secreted. Its subcellular location is the extracellular space. Its function is as follows. Extracellular signal peptide that regulates cell fate. May act with TDR as a ligand-receptor pair in a signal transduction pathway that represses tracheary element differentiation but promotes the formation of procambial cells adjacent to phloem cells in the veins in an auxin-dependent manner. Regulates the transition of protophloem cells from proliferation to differentiation, thus impinging on postembryonic growth capacity of the root meristem; this signaling pathway requires CRN and CLV2. The protein is CLAVATA3/ESR (CLE)-related protein 41 of Arabidopsis thaliana (Mouse-ear cress).